A 281-amino-acid chain; its full sequence is Aminoglycoside N(3)-acetyltransferase IX (281 aa).

The protein belongs to the antibiotic N-acetyltransferase family.

It carries out the reaction a 2-deoxystreptamine antibiotic + acetyl-CoA = an N(3)-acetyl-2-deoxystreptamine antibiotic + CoA + H(+). Functionally, resistance to neomycin. In Micromonospora chalcea, this protein is Aminoglycoside N(3)-acetyltransferase IX (aacC9).